We begin with the raw amino-acid sequence, 319 residues long: Ferrochelatase (319 aa).

Fe cation contacts are provided by histidine 193 and glutamate 274.

It belongs to the ferrochelatase family.

It localises to the cytoplasm. It carries out the reaction heme b + 2 H(+) = protoporphyrin IX + Fe(2+). Its pathway is porphyrin-containing compound metabolism; protoheme biosynthesis; protoheme from protoporphyrin-IX: step 1/1. Functionally, catalyzes the ferrous insertion into protoporphyrin IX. This Actinobacillus pleuropneumoniae serotype 7 (strain AP76) protein is Ferrochelatase.